We begin with the raw amino-acid sequence, 131 residues long: 14.7 kDa heat shock protein (131 aa).

Positions 1–11 (MSRNMEVNAGS) are enriched in polar residues. Residues 1 to 20 (MSRNMEVNAGSSGEIPSPIR) are disordered. Residues 22 to 131 (RFQKSGSQAV…INVKERILHY (110 aa)) enclose the sHSP domain.

It belongs to the small heat shock protein (HSP20) family. In terms of assembly, may form oligomeric structures.

The protein localises to the cytoplasm. The sequence is that of 14.7 kDa heat shock protein (HSP14.7) from Arabidopsis thaliana (Mouse-ear cress).